The sequence spans 574 residues: Glutamyl-tRNA(Gln) amidotransferase subunit B, mitochondrial (574 aa).

A mitochondrion-targeting transit peptide spans 1-12 (MIRQFVSHRGIP). Residues 34 to 62 (PLGRKNWSTSDEAKSKRAAMRKGGAPPPE) are disordered.

It belongs to the GatB/GatE family. GatB subfamily. In terms of assembly, subunit of the heterotrimeric GatCAB amidotransferase (AdT) complex, composed of A, B and C subunits.

The protein resides in the mitochondrion. It catalyses the reaction L-glutamyl-tRNA(Gln) + L-glutamine + ATP + H2O = L-glutaminyl-tRNA(Gln) + L-glutamate + ADP + phosphate + H(+). Functionally, allows the formation of correctly charged Gln-tRNA(Gln) through the transamidation of misacylated Glu-tRNA(Gln) in the mitochondria. The reaction takes place in the presence of glutamine and ATP through an activated gamma-phospho-Glu-tRNA(Gln). The polypeptide is Glutamyl-tRNA(Gln) amidotransferase subunit B, mitochondrial (Ajellomyces capsulatus (strain H143) (Darling's disease fungus)).